A 263-amino-acid chain; its full sequence is Tryptophan 2,3-dioxygenase (263 aa).

Substrate-binding positions include 32-36, Tyr-94, and Arg-98; that span reads FIVIH. Heme is bound at residue His-221. Thr-235 lines the substrate pocket.

The protein belongs to the tryptophan 2,3-dioxygenase family. Homotetramer. The cofactor is heme.

It catalyses the reaction L-tryptophan + O2 = N-formyl-L-kynurenine. It functions in the pathway amino-acid degradation; L-tryptophan degradation via kynurenine pathway; L-kynurenine from L-tryptophan: step 1/2. Heme-dependent dioxygenase that catalyzes the oxidative cleavage of the L-tryptophan (L-Trp) pyrrole ring and converts L-tryptophan to N-formyl-L-kynurenine. Catalyzes the oxidative cleavage of the indole moiety. This is Tryptophan 2,3-dioxygenase from Caulobacter vibrioides (strain ATCC 19089 / CIP 103742 / CB 15) (Caulobacter crescentus).